The sequence spans 127 residues: MPTIQQLIRDERSKAKRKTKSPALKQCPQRRGVCTRVYTTTPKKPNSALRKVARVRLTSGFEVTAYIPGIGHNLQEHSVVLIRGGRVKDLPGVRYHIIRGTLDATGVKNRQKARSKYGTKRPKPAAK.

Residues 1 to 28 form a disordered region; sequence MPTIQQLIRDERSKAKRKTKSPALKQCP. At aspartate 89 the chain carries 3-methylthioaspartic acid. Residues 104-127 form a disordered region; that stretch reads ATGVKNRQKARSKYGTKRPKPAAK. Residues 109–127 show a composition bias toward basic residues; sequence NRQKARSKYGTKRPKPAAK.

Belongs to the universal ribosomal protein uS12 family. As to quaternary structure, part of the 30S ribosomal subunit. Contacts proteins S8 and S17. May interact with IF1 in the 30S initiation complex.

In terms of biological role, with S4 and S5 plays an important role in translational accuracy. Its function is as follows. Interacts with and stabilizes bases of the 16S rRNA that are involved in tRNA selection in the A site and with the mRNA backbone. Located at the interface of the 30S and 50S subunits, it traverses the body of the 30S subunit contacting proteins on the other side and probably holding the rRNA structure together. The combined cluster of proteins S8, S12 and S17 appears to hold together the shoulder and platform of the 30S subunit. This Microcystis aeruginosa (strain NIES-843 / IAM M-2473) protein is Small ribosomal subunit protein uS12.